A 216-amino-acid polypeptide reads, in one-letter code: Probable GTP-binding protein EngB (216 aa).

An EngB-type G domain is found at 43-216 (DRLEVCFAGR…TLRSIITDLT (174 aa)). GTP contacts are provided by residues 51–58 (GRSNVGKS), 78–82 (GRTQE), 96–99 (DLPG), 163–166 (TKAD), and 197–199 (TSS). 2 residues coordinate Mg(2+): serine 58 and threonine 80.

It belongs to the TRAFAC class TrmE-Era-EngA-EngB-Septin-like GTPase superfamily. EngB GTPase family. Mg(2+) is required as a cofactor.

Necessary for normal cell division and for the maintenance of normal septation. This is Probable GTP-binding protein EngB from Roseobacter denitrificans (strain ATCC 33942 / OCh 114) (Erythrobacter sp. (strain OCh 114)).